Consider the following 100-residue polypeptide: Aspartyl/glutamyl-tRNA(Asn/Gln) amidotransferase subunit C (100 aa).

Belongs to the GatC family. As to quaternary structure, heterotrimer of A, B and C subunits.

The catalysed reaction is L-glutamyl-tRNA(Gln) + L-glutamine + ATP + H2O = L-glutaminyl-tRNA(Gln) + L-glutamate + ADP + phosphate + H(+). It carries out the reaction L-aspartyl-tRNA(Asn) + L-glutamine + ATP + H2O = L-asparaginyl-tRNA(Asn) + L-glutamate + ADP + phosphate + 2 H(+). In terms of biological role, allows the formation of correctly charged Asn-tRNA(Asn) or Gln-tRNA(Gln) through the transamidation of misacylated Asp-tRNA(Asn) or Glu-tRNA(Gln) in organisms which lack either or both of asparaginyl-tRNA or glutaminyl-tRNA synthetases. The reaction takes place in the presence of glutamine and ATP through an activated phospho-Asp-tRNA(Asn) or phospho-Glu-tRNA(Gln). In Streptococcus equi subsp. zooepidemicus (strain H70), this protein is Aspartyl/glutamyl-tRNA(Asn/Gln) amidotransferase subunit C.